We begin with the raw amino-acid sequence, 251 residues long: MNHFAKRIIPCLDVKDGRVVKGVNFVGLVDAGDPVEIAKRYNDEGADELCFLDITASHLGRDTIVDVVKKVASKLFIPLTVGGGIRTIDDISRLLNAGCDKVSLNSSAIKDPNLIDEAAKKFGSQCVVVAIDAKKIENGYSVFINGGRIDTKKDAFSWAKEVESRGAGEILLTSMDNDGVKQGFSLELTKIFSALSIPTIASGGAGKMEHFKDAFEVGADACLAASIFHFGEIEIKKLKEYLKANGVEVRL.

Catalysis depends on residues aspartate 13 and aspartate 132.

This sequence belongs to the HisA/HisF family. Heterodimer of HisH and HisF.

The protein resides in the cytoplasm. It catalyses the reaction 5-[(5-phospho-1-deoxy-D-ribulos-1-ylimino)methylamino]-1-(5-phospho-beta-D-ribosyl)imidazole-4-carboxamide + L-glutamine = D-erythro-1-(imidazol-4-yl)glycerol 3-phosphate + 5-amino-1-(5-phospho-beta-D-ribosyl)imidazole-4-carboxamide + L-glutamate + H(+). The protein operates within amino-acid biosynthesis; L-histidine biosynthesis; L-histidine from 5-phospho-alpha-D-ribose 1-diphosphate: step 5/9. Its function is as follows. IGPS catalyzes the conversion of PRFAR and glutamine to IGP, AICAR and glutamate. The HisF subunit catalyzes the cyclization activity that produces IGP and AICAR from PRFAR using the ammonia provided by the HisH subunit. This Campylobacter concisus (strain 13826) protein is Imidazole glycerol phosphate synthase subunit HisF.